Reading from the N-terminus, the 299-residue chain is Acetylglutamate kinase (299 aa).

Substrate-binding positions include 72-73 (GG), arginine 94, and asparagine 196.

Belongs to the acetylglutamate kinase family. ArgB subfamily.

The protein localises to the cytoplasm. It catalyses the reaction N-acetyl-L-glutamate + ATP = N-acetyl-L-glutamyl 5-phosphate + ADP. It participates in amino-acid biosynthesis; L-arginine biosynthesis; N(2)-acetyl-L-ornithine from L-glutamate: step 2/4. Catalyzes the ATP-dependent phosphorylation of N-acetyl-L-glutamate. This chain is Acetylglutamate kinase, found in Burkholderia cenocepacia (strain HI2424).